The sequence spans 94 residues: Aspartyl/glutamyl-tRNA(Asn/Gln) amidotransferase subunit C (94 aa).

This sequence belongs to the GatC family. In terms of assembly, heterotrimer of A, B and C subunits.

The enzyme catalyses L-glutamyl-tRNA(Gln) + L-glutamine + ATP + H2O = L-glutaminyl-tRNA(Gln) + L-glutamate + ADP + phosphate + H(+). The catalysed reaction is L-aspartyl-tRNA(Asn) + L-glutamine + ATP + H2O = L-asparaginyl-tRNA(Asn) + L-glutamate + ADP + phosphate + 2 H(+). Functionally, allows the formation of correctly charged Asn-tRNA(Asn) or Gln-tRNA(Gln) through the transamidation of misacylated Asp-tRNA(Asn) or Glu-tRNA(Gln) in organisms which lack either or both of asparaginyl-tRNA or glutaminyl-tRNA synthetases. The reaction takes place in the presence of glutamine and ATP through an activated phospho-Asp-tRNA(Asn) or phospho-Glu-tRNA(Gln). The chain is Aspartyl/glutamyl-tRNA(Asn/Gln) amidotransferase subunit C from Hydrogenobaculum sp. (strain Y04AAS1).